The primary structure comprises 217 residues: Small ribosomal subunit protein uS11m (217 aa).

A mitochondrion-targeting transit peptide spans 1-59; that stretch reads MLLQPVWKGCRWTQFVRPIRRWNSTGTNRGVPFSFKDISNQEDITNISYPSSSDSVLTK.

It belongs to the universal ribosomal protein uS11 family. Component of the mitochondrial small ribosomal subunit (mt-SSU). Mature yeast 74S mitochondrial ribosomes consist of a small (37S) and a large (54S) subunit. The 37S small subunit contains a 15S ribosomal RNA (15S mt-rRNA) and 34 different proteins. The 54S large subunit contains a 21S rRNA (21S mt-rRNA) and 46 different proteins.

It localises to the mitochondrion. Component of the mitochondrial ribosome (mitoribosome), a dedicated translation machinery responsible for the synthesis of mitochondrial genome-encoded proteins, including at least some of the essential transmembrane subunits of the mitochondrial respiratory chain. The mitoribosomes are attached to the mitochondrial inner membrane and translation products are cotranslationally integrated into the membrane. The protein is Small ribosomal subunit protein uS11m (MRPS18) of Saccharomyces cerevisiae (strain ATCC 204508 / S288c) (Baker's yeast).